A 38-amino-acid chain; its full sequence is Exendin-1 (38 aa).

Residue Ser32 is glycosylated (O-linked (HexNAc...) serine; in Exendin-1 and Exendin-1b).

Belongs to the glucagon family. O-linked glycan consists of Hex-HexNAc saccharide. In terms of processing, glycosylation may be of interest for the biological stability of exendin-1 and exendin-1b. In terms of tissue distribution, expressed by the venom gland.

The protein resides in the secreted. Its function is as follows. O-linked and free exendin-1 and exendin-1b have vasoactive intestinal peptide(VIP)/secretin-like biological activities. They interact with rat and human VIP receptors 1 (VIPR1) and 2 (VIPR2), with the highest affinity for the human VIPR2. They induce hypotension that is mediated by relaxation of cardiac smooth muscle. The polypeptide is Exendin-1 (Heloderma horridum horridum (Mexican beaded lizard)).